Here is a 149-residue protein sequence, read N- to C-terminus: Nucleoside diphosphate kinase (149 aa).

ATP-binding residues include Lys9, Phe57, Arg85, Thr91, Arg102, and Asn112. The active-site Pros-phosphohistidine intermediate is His115.

The protein belongs to the NDK family. As to quaternary structure, homotetramer. Requires Mg(2+) as cofactor.

It is found in the cytoplasm. The enzyme catalyses a 2'-deoxyribonucleoside 5'-diphosphate + ATP = a 2'-deoxyribonucleoside 5'-triphosphate + ADP. It carries out the reaction a ribonucleoside 5'-diphosphate + ATP = a ribonucleoside 5'-triphosphate + ADP. Its function is as follows. Major role in the synthesis of nucleoside triphosphates other than ATP. The ATP gamma phosphate is transferred to the NDP beta phosphate via a ping-pong mechanism, using a phosphorylated active-site intermediate. This Crocosphaera subtropica (strain ATCC 51142 / BH68) (Cyanothece sp. (strain ATCC 51142)) protein is Nucleoside diphosphate kinase.